A 57-amino-acid polypeptide reads, in one-letter code: Large ribosomal subunit protein bL32 (57 aa).

Residues 1–19 (MAVPKRRMSRSNTRSRRSQ) show a composition bias toward basic residues. The segment at 1 to 21 (MAVPKRRMSRSNTRSRRSQWK) is disordered.

Belongs to the bacterial ribosomal protein bL32 family.

This chain is Large ribosomal subunit protein bL32, found in Mycobacteroides abscessus (strain ATCC 19977 / DSM 44196 / CCUG 20993 / CIP 104536 / JCM 13569 / NCTC 13031 / TMC 1543 / L948) (Mycobacterium abscessus).